We begin with the raw amino-acid sequence, 333 residues long: 4-hydroxythreonine-4-phosphate dehydrogenase (333 aa).

Histidine 136 and threonine 137 together coordinate substrate. A divalent metal cation contacts are provided by histidine 166, histidine 211, and histidine 266. Substrate contacts are provided by lysine 274, asparagine 283, and arginine 292.

It belongs to the PdxA family. In terms of assembly, homodimer. It depends on Zn(2+) as a cofactor. Mg(2+) serves as cofactor. The cofactor is Co(2+).

The protein resides in the cytoplasm. The catalysed reaction is 4-(phosphooxy)-L-threonine + NAD(+) = 3-amino-2-oxopropyl phosphate + CO2 + NADH. Its pathway is cofactor biosynthesis; pyridoxine 5'-phosphate biosynthesis; pyridoxine 5'-phosphate from D-erythrose 4-phosphate: step 4/5. Catalyzes the NAD(P)-dependent oxidation of 4-(phosphooxy)-L-threonine (HTP) into 2-amino-3-oxo-4-(phosphooxy)butyric acid which spontaneously decarboxylates to form 3-amino-2-oxopropyl phosphate (AHAP). The sequence is that of 4-hydroxythreonine-4-phosphate dehydrogenase from Acidithiobacillus ferrooxidans (strain ATCC 23270 / DSM 14882 / CIP 104768 / NCIMB 8455) (Ferrobacillus ferrooxidans (strain ATCC 23270)).